The primary structure comprises 54 residues: Photosystem II reaction center protein K (54 aa).

The propeptide occupies 1–17 (MSFENFAIITLKENVFA). A helical membrane pass occupies residues 33–53 (LPIIPVLFLLLAFVWQSAVKF).

The protein belongs to the PsbK family. PSII is composed of 1 copy each of membrane proteins PsbA, PsbB, PsbC, PsbD, PsbE, PsbF, PsbH, PsbI, PsbJ, PsbK, PsbL, PsbM, PsbT, PsbY, PsbZ, Psb30/Ycf12, at least 3 peripheral proteins of the oxygen-evolving complex and a large number of cofactors. It forms dimeric complexes.

The protein localises to the plastid. Its subcellular location is the chloroplast thylakoid membrane. Functionally, one of the components of the core complex of photosystem II (PSII). PSII is a light-driven water:plastoquinone oxidoreductase that uses light energy to abstract electrons from H(2)O, generating O(2) and a proton gradient subsequently used for ATP formation. It consists of a core antenna complex that captures photons, and an electron transfer chain that converts photonic excitation into a charge separation. This chain is Photosystem II reaction center protein K, found in Euglena deses.